The sequence spans 503 residues: Maturase K (503 aa).

Belongs to the intron maturase 2 family. MatK subfamily.

It localises to the plastid. The protein localises to the chloroplast. In terms of biological role, usually encoded in the trnK tRNA gene intron. Probably assists in splicing its own and other chloroplast group II introns. The polypeptide is Maturase K (Liquidambar styraciflua (Sweetgum tree)).